The chain runs to 135 residues: Protein NrdI (135 aa).

The protein belongs to the NrdI family.

Its function is as follows. Probably involved in ribonucleotide reductase function. The polypeptide is Protein NrdI (Pectobacterium atrosepticum (strain SCRI 1043 / ATCC BAA-672) (Erwinia carotovora subsp. atroseptica)).